A 340-amino-acid polypeptide reads, in one-letter code: Anthocyanidin reductase (340 aa).

Residues Lys49 and Tyr169 each contribute to the NADP(+) site.

Belongs to the NAD(P)-dependent epimerase/dehydratase family. Dihydroflavonol-4-reductase subfamily. In terms of assembly, homo- or heterodimer. In terms of tissue distribution, flowers and young siliques. Detected specifically in the endothelium of seed coat.

The catalysed reaction is a (2R,3R)-flavan-3-ol + 2 NAD(+) = an anthocyanidin with a 3-hydroxy group + 2 NADH + 2 H(+). The enzyme catalyses a (2R,3R)-flavan-3-ol + 2 NADP(+) = an anthocyanidin with a 3-hydroxy group + 2 NADPH + 2 H(+). It participates in secondary metabolite biosynthesis; flavonoid biosynthesis. Inhibited by (+)-catechin, quercetin and (+)- and (-)-dihydroquercetin. Not inhibited by salt. Positive cooperativity with NADPH acting as cosubstrate and modulator. Involved in the biosynthesis of condensed tannins. Converts cyanidin into (-)-epicatechin as the major product. This is Anthocyanidin reductase (BAN) from Arabidopsis thaliana (Mouse-ear cress).